Reading from the N-terminus, the 30-residue chain is Cytochrome c oxidase subunit 5C (30 aa).

The chain crosses the membrane as a helical span at residues 15–30; that stretch reads VVKELVIXXXLGLXAG.

It belongs to the cytochrome c oxidase subunit 5C family.

The protein localises to the mitochondrion inner membrane. In terms of biological role, this protein is one of the nuclear-coded polypeptide chains of cytochrome c oxidase, the terminal oxidase in mitochondrial electron transport. This is Cytochrome c oxidase subunit 5C (COX5C) from Solanum tuberosum (Potato).